The sequence spans 589 residues: Ectoderm-neural cortex protein 1 (589 aa).

A BTB domain is found at 46–114 (TDVLLHAGNR…AYSSRVIINE (69 aa)). Kelch repeat units lie at residues 296–340 (ALFL…AIGC), 341–388 (KVYI…ELKH), 389–444 (CLYV…SAKL), 446–492 (LFAF…VLGN), 494–538 (IFIM…ASGN), and 539–585 (KLYV…STWK).

In terms of assembly, binds to RB1. Hypophosphorylated RB1 associates with ENC1 during neuronal differentiation, while hyperphosphorylated RB1 associates with ENC1 in undifferentiating cells. Part of a complex that contains CUL3, RBX1 and ENC1. Interacts indirectly with KEAP1. Ubiquitinated by E3 ubiquitin ligase complex formed by CUL3 and RBX1 and probably targeted for proteasome-independent degradation. Quinone-induced oxidative stress increases its ubiquitination. Primarily expressed in the nervous system.

It is found in the nucleus matrix. The protein resides in the cytoplasm. It localises to the cytoskeleton. In terms of biological role, actin-binding protein involved in the regulation of neuronal process formation and in differentiation of neural crest cells. Down-regulates transcription factor NF2L2/NRF2 by decreasing the rate of protein synthesis and not via a ubiquitin-mediated proteasomal degradation mechanism. This is Ectoderm-neural cortex protein 1 (Enc1) from Mus musculus (Mouse).